Here is an 800-residue protein sequence, read N- to C-terminus: Phenylalanine--tRNA ligase beta subunit (800 aa).

Residues 39–152 (AAGLSKIVVG…EDAVPGEEVF (114 aa)) form the tRNA-binding domain. Residues 405 to 480 (TSDVEVSSTL…RIYGYDRLPT (76 aa)) form the B5 domain. Residues Asp458, Asp464, Glu467, and Glu468 each contribute to the Mg(2+) site. Positions 707-800 (TKFPAVSRDV…LEEKVNAEVR (94 aa)) constitute an FDX-ACB domain.

This sequence belongs to the phenylalanyl-tRNA synthetase beta subunit family. Type 1 subfamily. In terms of assembly, tetramer of two alpha and two beta subunits. Requires Mg(2+) as cofactor.

It is found in the cytoplasm. The enzyme catalyses tRNA(Phe) + L-phenylalanine + ATP = L-phenylalanyl-tRNA(Phe) + AMP + diphosphate + H(+). The chain is Phenylalanine--tRNA ligase beta subunit from Streptococcus pneumoniae (strain ATCC BAA-255 / R6).